A 251-amino-acid polypeptide reads, in one-letter code: Hydroxyacylglutathione hydrolase (251 aa).

Residues histidine 53, histidine 55, aspartate 57, histidine 58, histidine 110, aspartate 127, and histidine 165 each contribute to the Zn(2+) site.

The protein belongs to the metallo-beta-lactamase superfamily. Glyoxalase II family. In terms of assembly, monomer. Zn(2+) is required as a cofactor.

It catalyses the reaction an S-(2-hydroxyacyl)glutathione + H2O = a 2-hydroxy carboxylate + glutathione + H(+). It functions in the pathway secondary metabolite metabolism; methylglyoxal degradation; (R)-lactate from methylglyoxal: step 2/2. Its function is as follows. Thiolesterase that catalyzes the hydrolysis of S-D-lactoyl-glutathione to form glutathione and D-lactic acid. This Salmonella gallinarum (strain 287/91 / NCTC 13346) protein is Hydroxyacylglutathione hydrolase.